A 292-amino-acid chain; its full sequence is 4-hydroxy-tetrahydrodipicolinate synthase (292 aa).

Residue Thr45 coordinates pyruvate. Tyr133 acts as the Proton donor/acceptor in catalysis. Lys161 (schiff-base intermediate with substrate) is an active-site residue. A pyruvate-binding site is contributed by Ile203.

Belongs to the DapA family. As to quaternary structure, homotetramer; dimer of dimers.

The protein localises to the cytoplasm. It carries out the reaction L-aspartate 4-semialdehyde + pyruvate = (2S,4S)-4-hydroxy-2,3,4,5-tetrahydrodipicolinate + H2O + H(+). Its pathway is amino-acid biosynthesis; L-lysine biosynthesis via DAP pathway; (S)-tetrahydrodipicolinate from L-aspartate: step 3/4. Catalyzes the condensation of (S)-aspartate-beta-semialdehyde [(S)-ASA] and pyruvate to 4-hydroxy-tetrahydrodipicolinate (HTPA). The sequence is that of 4-hydroxy-tetrahydrodipicolinate synthase from Acidiphilium cryptum (strain JF-5).